Reading from the N-terminus, the 393-residue chain is Bifunctional enzyme Fae/Hps (393 aa).

The interval 1–161 (MYQIGEALVG…YEKDRGAHAV (161 aa)) is formaldehyde-activating enzyme. H17 functions as the Proton donor in the catalytic mechanism. The substrate site is built by D19, L48, K66, T68, and Q83. The tract at residues 162-393 (MGFKVQRLWD…IDQFRVMTDF (232 aa)) is 3-hexulose-6-phosphate synthase.

It in the N-terminal section; belongs to the formaldehyde-activating enzyme family. In the C-terminal section; belongs to the HPS/KGPDC family. HPS subfamily.

It catalyses the reaction 5,6,7,8-tetrahydromethanopterin + formaldehyde = 5,10-methylenetetrahydromethanopterin + H2O. It carries out the reaction D-ribulose 5-phosphate + formaldehyde = D-arabino-hex-3-ulose 6-phosphate. It functions in the pathway carbohydrate biosynthesis; D-ribose 5-phosphate biosynthesis. Its function is as follows. Catalyzes the condensation of formaldehyde with tetrahydromethanopterin (H(4)MPT) to 5,10-methylenetetrahydromethanopterin. Catalyzes the reversible formation of ribulose-5-phosphate and formaldehyde from 3-hexulose-6-phosphate. This chain is Bifunctional enzyme Fae/Hps, found in Methanosphaerula palustris (strain ATCC BAA-1556 / DSM 19958 / E1-9c).